Here is a 240-residue protein sequence, read N- to C-terminus: MSTSLVSKPLASKAVVVFSGGQDSTTCLIQALTQYDEVHGITFDYGQRHREEIEVAKSLAKRLKITSHKVMDVTLLNELAISALTRDAIPVSHELMENGLPNTFVPGRNILFLTLAGIYAYQLGAEAIITGVCETDFSGYPDCRNDFVKAMESALVQGMDKQLKIITPLMWLNKAQTWALADKYQQLDLVRHHTLTCYNGVIGDGCGDCPACHLRKRGLDEYMQDKTAVMASLDASEPKA.

18-28 serves as a coordination point for ATP; the sequence is FSGGQDSTTCL. Residues C197, C206, C209, and C212 each coordinate Zn(2+).

Belongs to the QueC family. Requires Zn(2+) as cofactor.

The enzyme catalyses 7-carboxy-7-deazaguanine + NH4(+) + ATP = 7-cyano-7-deazaguanine + ADP + phosphate + H2O + H(+). It participates in purine metabolism; 7-cyano-7-deazaguanine biosynthesis. Its function is as follows. Catalyzes the ATP-dependent conversion of 7-carboxy-7-deazaguanine (CDG) to 7-cyano-7-deazaguanine (preQ(0)). This is 7-cyano-7-deazaguanine synthase from Shewanella baltica (strain OS223).